Consider the following 568-residue polypeptide: Putative U-box domain-containing protein 55 (568 aa).

Positions 217-464 (QSESDRNDQL…KVAAEKDAAS (248 aa)) form a coiled coil. In terms of domain architecture, U-box spans 496 to 568 (QPPSYFICPI…AIQEWLQRNS (73 aa)).

It catalyses the reaction S-ubiquitinyl-[E2 ubiquitin-conjugating enzyme]-L-cysteine + [acceptor protein]-L-lysine = [E2 ubiquitin-conjugating enzyme]-L-cysteine + N(6)-ubiquitinyl-[acceptor protein]-L-lysine.. It participates in protein modification; protein ubiquitination. Functionally, functions as an E3 ubiquitin ligase. This chain is Putative U-box domain-containing protein 55 (PUB55), found in Arabidopsis thaliana (Mouse-ear cress).